A 391-amino-acid chain; its full sequence is Inactive polyketide synthase 2 (391 aa).

Cysteine 164 is a catalytic residue.

The protein belongs to the thiolase-like superfamily. Chalcone/stilbene synthases family. As to quaternary structure, homodimer.

The chain is Inactive polyketide synthase 2 (PKS2) from Rubus idaeus (Raspberry).